Consider the following 154-residue polypeptide: Endoribonuclease YbeY (154 aa).

Zn(2+)-binding residues include H115, H119, and H125.

The protein belongs to the endoribonuclease YbeY family. The cofactor is Zn(2+).

It localises to the cytoplasm. Functionally, single strand-specific metallo-endoribonuclease involved in late-stage 70S ribosome quality control and in maturation of the 3' terminus of the 16S rRNA. This is Endoribonuclease YbeY from Halorhodospira halophila (strain DSM 244 / SL1) (Ectothiorhodospira halophila (strain DSM 244 / SL1)).